A 320-amino-acid chain; its full sequence is MALRMIFMGTPEFSVPILNALFDAGHQIVAVYSQPPRPAGRRGLDLTKSPVHQQAEKLGLPVLTPLNFKAQDDRDAFAAHQADVAVVVAYGLLLPEAILTGTRLGCYNGHASLLPRWRGAAPIQRAIMAGDVQTGMMVMKMDKGLDTGPVALTRRVTITPDMTAGELHDALSQIGAEAMVEAMAKLEAGDLPLTAQPEDGVVYATKIDKAETRINFSKPATQVHNDIRGLSPFPGAWFEADINGKLERIKVLSSQMAEVTDTANVPGTVLDDALTIACGLGAVRLVRLQKAGGKPLDAAEFLRGTPIGAGTVFASAKAGT.

112-115 (SLLP) lines the (6S)-5,6,7,8-tetrahydrofolate pocket.

The protein belongs to the Fmt family.

The enzyme catalyses L-methionyl-tRNA(fMet) + (6R)-10-formyltetrahydrofolate = N-formyl-L-methionyl-tRNA(fMet) + (6S)-5,6,7,8-tetrahydrofolate + H(+). Its function is as follows. Attaches a formyl group to the free amino group of methionyl-tRNA(fMet). The formyl group appears to play a dual role in the initiator identity of N-formylmethionyl-tRNA by promoting its recognition by IF2 and preventing the misappropriation of this tRNA by the elongation apparatus. The chain is Methionyl-tRNA formyltransferase from Allorhizobium ampelinum (strain ATCC BAA-846 / DSM 112012 / S4) (Agrobacterium vitis (strain S4)).